A 312-amino-acid chain; its full sequence is Olfactory receptor 6C1 (312 aa).

At 1–23 (MRNHTEITEFILLGLTDDPNFQV) the chain is on the extracellular side. N3 carries an N-linked (GlcNAc...) asparagine glycan. A helical transmembrane segment spans residues 24–44 (VIFVFLLITYMLSITGNLTLI). Residues 45-52 (TITLLDSH) are Cytoplasmic-facing. A helical transmembrane segment spans residues 53-73 (LQTPMYFFLRNFSILEISFTT). The Extracellular portion of the chain corresponds to 74-97 (VSIPKFLGNIISGDKTISFNNCIV). A disulfide bridge connects residues C95 and C187. Residues 98–118 (QLFFFILLGVTEFYLLAAMSY) traverse the membrane as a helical segment. At 119-137 (DRYVAICKPLHCLSIMNRR) the chain is on the cytoplasmic side. Residues 138-158 (VCTLLVFTSWLVSFLIIFPAL) form a helical membrane-spanning segment. The Extracellular segment spans residues 159-195 (MLLLKLHYCRSNIIDHFTCDYFPLLQLACSDTKFLEV). The helical transmembrane segment at 196 to 215 (MGFSCAAFTLMFTLALIFLS) threads the bilayer. Topologically, residues 216–235 (YIYIIRTILRIPSTSQRTKA) are cytoplasmic. Residues 236–256 (FSTCSSHMVVVSISYGSCIFM) traverse the membrane as a helical segment. The Extracellular segment spans residues 257–269 (YIKPSAKDRVSLS). Residues 270–290 (KGVAILNTSVAPMMNPFIYSL) form a helical membrane-spanning segment. At 291 to 312 (RNQQVKQAFINMARKTVFFTST) the chain is on the cytoplasmic side.

It belongs to the G-protein coupled receptor 1 family.

It is found in the cell membrane. Odorant receptor. The chain is Olfactory receptor 6C1 (OR6C1) from Homo sapiens (Human).